The sequence spans 272 residues: Secretagogin (272 aa).

6 consecutive EF-hand domains span residues 8–43 (LDAAGFLQIWQHFDADDNGYIEGKELDDFFRHMLKK), 53–89 (ERVQQIKKSFMSAYDATFDGRLQIEELANMILPQEEN), 101–136 (DNSVEFMKIWRKYDADSSGYISAAELKNFLKDLFLQ), 145–180 (KLDEYTDAMMKIFDKNKDGRLDLNDLARILALQENF), 193–228 (ERKRDFEKIFAHYDVSRTGALEGPEVDGFVKDMMEL), and 237–272 (DLDKFRECLLTHCDMNKDGKIQKSELALCLGLKHKP). The Ca(2+) site is built by aspartate 21, aspartate 23, asparagine 25, tyrosine 27, and glutamate 32. Residues aspartate 114, aspartate 116, serine 118, tyrosine 120, glutamate 125, aspartate 158, asparagine 160, aspartate 162, arginine 164, aspartate 169, aspartate 206, serine 208, threonine 210, glutamate 217, aspartate 250, asparagine 252, aspartate 254, lysine 256, and glutamate 261 each coordinate Ca(2+).

The protein resides in the cytoplasm. The protein is Secretagogin (scgn) of Danio rerio (Zebrafish).